The following is a 353-amino-acid chain: L-tryptophan dehydrogenase (353 aa).

R44 lines the NAD(+) pocket. The active-site Proton donor/acceptor is the K80. NAD(+)-binding positions include D114, T146, 176–181, K204, and 255–257; these read GLGNVG and AAN.

It belongs to the Glu/Leu/Phe/Val dehydrogenases family. As to quaternary structure, homodimer.

It catalyses the reaction L-tryptophan + NAD(+) + H2O = indole-3-pyruvate + NH4(+) + NADH + H(+). Its function is as follows. Catalyzes the reversible oxidative deamination of L-tryptophan to indole-3-pyruvate in the presence of NAD(+). Cannot use other L-amino acids and D-Trp. Involved in the biosynthesis of scytonemin, a cyanobacterial radiation-absorbing pigment. The protein is L-tryptophan dehydrogenase of Nostoc punctiforme (strain ATCC 29133 / PCC 73102).